A 641-amino-acid chain; its full sequence is Protein zwilch (641 aa).

S312 carries the phosphoserine modification.

Belongs to the ZWILCH family. As to quaternary structure, component of the RZZ complex composed of rod, Zw10 and Zwilch.

The protein localises to the cytoplasm. It is found in the chromosome. It localises to the centromere. Its subcellular location is the kinetochore. The protein resides in the cytoskeleton. The protein localises to the spindle. Its function is as follows. Essential component of the mitotic checkpoint, which prevents cells from prematurely exiting mitosis. Required for the assembly of the dynein-dynactin, Mad2 complexes and spindly/CG15415 onto kinetochores. Its function related to the spindle assembly machinery is proposed to depend on its association in the RZZ complex. Failure to assemble the complex due to the absence of any one of its components, results in the incorrect redistribution of the remaining components to diverse membrane compartments. This chain is Protein zwilch, found in Drosophila melanogaster (Fruit fly).